Here is a 469-residue protein sequence, read N- to C-terminus: 3-isopropylmalate dehydratase large subunit (469 aa).

[4Fe-4S] cluster is bound by residues cysteine 347, cysteine 408, and cysteine 411.

It belongs to the aconitase/IPM isomerase family. LeuC type 1 subfamily. As to quaternary structure, heterodimer of LeuC and LeuD. Requires [4Fe-4S] cluster as cofactor.

It carries out the reaction (2R,3S)-3-isopropylmalate = (2S)-2-isopropylmalate. Its pathway is amino-acid biosynthesis; L-leucine biosynthesis; L-leucine from 3-methyl-2-oxobutanoate: step 2/4. Its function is as follows. Catalyzes the isomerization between 2-isopropylmalate and 3-isopropylmalate, via the formation of 2-isopropylmaleate. This Actinobacillus pleuropneumoniae serotype 5b (strain L20) protein is 3-isopropylmalate dehydratase large subunit.